A 502-amino-acid chain; its full sequence is Premnaspirodiene oxygenase (502 aa).

A helical transmembrane segment spans residues 2–22 (QFFSLVSIFLFLSFLFLLRKW). C440 is a heme binding site.

It belongs to the cytochrome P450 family. Heme is required as a cofactor.

It is found in the membrane. It carries out the reaction (-)-vetispiradiene + 2 reduced [NADPH--hemoprotein reductase] + 2 O2 = solavetivone + 2 oxidized [NADPH--hemoprotein reductase] + 3 H2O + 2 H(+). Its function is as follows. Involved in the biosynthesis of solavetivone, a potent antifungal phytoalexin. Catalyzes the successive and independent hydroxylations of premnaspirodiene and solavetivol. The first hydroxylation step is 3-fold more efficient than the second hydroxylation reaction. This is Premnaspirodiene oxygenase (CYP71D55) from Hyoscyamus muticus (Egyptian henbane).